The chain runs to 441 residues: Xylose isomerase (441 aa).

Residues His-100 and Asp-103 contribute to the active site. Positions 231, 267, 270, 295, 306, 308, and 338 each coordinate Mg(2+).

This sequence belongs to the xylose isomerase family. Homotetramer. It depends on Mg(2+) as a cofactor.

The protein resides in the cytoplasm. It catalyses the reaction alpha-D-xylose = alpha-D-xylulofuranose. The polypeptide is Xylose isomerase (Paraburkholderia phymatum (strain DSM 17167 / CIP 108236 / LMG 21445 / STM815) (Burkholderia phymatum)).